The primary structure comprises 551 residues: CTP synthase (551 aa).

The amidoligase domain stretch occupies residues 1 to 273; it reads MKNTTNTKRT…DSKILELLNI (273 aa). CTP is bound at residue serine 21. Serine 21 contacts UTP. ATP contacts are provided by residues 22–27 and aspartate 79; that span reads SLGKGL. 2 residues coordinate Mg(2+): aspartate 79 and glutamate 147. CTP is bound by residues 154–156, 194–199, and lysine 230; these read DIE and KTKPTQ. Residues 194–199 and lysine 230 contribute to the UTP site; that span reads KTKPTQ. Residues 298–551 form the Glutamine amidotransferase type-1 domain; that stretch reads TIAITGKYVD…ISAAVANKKG (254 aa). L-glutamine is bound at residue glycine 360. The active-site Nucleophile; for glutamine hydrolysis is cysteine 387. L-glutamine is bound by residues 388-391, glutamate 411, and arginine 479; that span reads LGMQ. Active-site residues include histidine 524 and glutamate 526.

The protein belongs to the CTP synthase family. In terms of assembly, homotetramer.

It carries out the reaction UTP + L-glutamine + ATP + H2O = CTP + L-glutamate + ADP + phosphate + 2 H(+). It catalyses the reaction L-glutamine + H2O = L-glutamate + NH4(+). The catalysed reaction is UTP + NH4(+) + ATP = CTP + ADP + phosphate + 2 H(+). It participates in pyrimidine metabolism; CTP biosynthesis via de novo pathway; CTP from UDP: step 2/2. Its activity is regulated as follows. Allosterically activated by GTP, when glutamine is the substrate; GTP has no effect on the reaction when ammonia is the substrate. The allosteric effector GTP functions by stabilizing the protein conformation that binds the tetrahedral intermediate(s) formed during glutamine hydrolysis. Inhibited by the product CTP, via allosteric rather than competitive inhibition. In terms of biological role, catalyzes the ATP-dependent amination of UTP to CTP with either L-glutamine or ammonia as the source of nitrogen. Regulates intracellular CTP levels through interactions with the four ribonucleotide triphosphates. This Desulfotalea psychrophila (strain LSv54 / DSM 12343) protein is CTP synthase.